Reading from the N-terminus, the 239-residue chain is Ribosomal RNA small subunit methyltransferase G (239 aa).

S-adenosyl-L-methionine contacts are provided by residues G77, F82, 128-129, and R147; that span reads AE.

It belongs to the methyltransferase superfamily. RNA methyltransferase RsmG family.

Its subcellular location is the cytoplasm. In terms of biological role, specifically methylates the N7 position of guanine in position 535 of 16S rRNA. The sequence is that of Ribosomal RNA small subunit methyltransferase G from Bacillus mycoides (strain KBAB4) (Bacillus weihenstephanensis).